The following is a 120-amino-acid chain: Large ribosomal subunit protein uL18 (120 aa).

The segment covering 1 to 10 has biased composition (basic and acidic residues); sequence MKLNRVESTR. Residues 1-26 are disordered; it reads MKLNRVESTRSRHRRVRRKVGGTGDR. Basic residues predominate over residues 11-20; sequence SRHRRVRRKV.

This sequence belongs to the universal ribosomal protein uL18 family. Part of the 50S ribosomal subunit; part of the 5S rRNA/L5/L18/L25 subcomplex. Contacts the 5S and 23S rRNAs.

In terms of biological role, this is one of the proteins that bind and probably mediate the attachment of the 5S RNA into the large ribosomal subunit, where it forms part of the central protuberance. This Cyanothece sp. (strain PCC 7425 / ATCC 29141) protein is Large ribosomal subunit protein uL18.